The following is a 153-amino-acid chain: MPITDLVAPEAILPALKVNSKKQALQELAAKAAELTGQNERAVFEVLLQREKLGTTAVGYGVAIPHGKLPKLEKIFGLFARLDRPIDFESMDGQPVDLVFLLLAPEGAGADHLKALARIARLLRDQDIAKKLRASRDAQAIYSVLALPPATAA.

Residues 5-148 enclose the PTS EIIA type-2 domain; sequence DLVAPEAILP…QAIYSVLALP (144 aa). Catalysis depends on histidine 66, which acts as the Tele-phosphohistidine intermediate.

It localises to the cytoplasm. Its function is as follows. Seems to have a role in regulating nitrogen assimilation. This Bradyrhizobium diazoefficiens (strain JCM 10833 / BCRC 13528 / IAM 13628 / NBRC 14792 / USDA 110) protein is Nitrogen regulatory protein (ptsN).